Here is a 615-residue protein sequence, read N- to C-terminus: ATP-dependent zinc metalloprotease FtsH (615 aa).

The Cytoplasmic portion of the chain corresponds to 1–8 (MAMNKDKP). The chain crosses the membrane as a helical span at residues 9-29 (WTLYLLAVGLAVLAAVQFGLF). Residues 30-104 (SQPAVQAIPY…FSGVVEDNTV (75 aa)) lie on the Periplasmic side of the membrane. The helical transmembrane segment at 105–125 (ATVMGALMPLLMLLALWYFLF) threads the bilayer. The Cytoplasmic portion of the chain corresponds to 126–615 (HGLGQKQGLG…ATYVLVDATK (490 aa)). Residue 198 to 205 (GPPGTGKT) coordinates ATP. H420 lines the Zn(2+) pocket. Residue E421 is part of the active site. Zn(2+) contacts are provided by H424 and D497.

In the central section; belongs to the AAA ATPase family. This sequence in the C-terminal section; belongs to the peptidase M41 family. Homohexamer. Requires Zn(2+) as cofactor.

It localises to the cell inner membrane. In terms of biological role, acts as a processive, ATP-dependent zinc metallopeptidase for both cytoplasmic and membrane proteins. Plays a role in the quality control of integral membrane proteins. The chain is ATP-dependent zinc metalloprotease FtsH from Pseudomonas putida (strain ATCC 700007 / DSM 6899 / JCM 31910 / BCRC 17059 / LMG 24140 / F1).